The primary structure comprises 1386 residues: Putative ATP-dependent RNA helicase DHX57 (1386 aa).

Basic residues predominate over residues 1 to 11; it reads MSSSVRRKGKP. 2 disordered regions span residues 1–106 and 120–147; these read MSSS…MTSE and EQDADAGSERGLSGEEEDDEPDCCNDER. 2 stretches are compositionally biased toward gly residues: residues 12–23 and 35–50; these read GKGGGKGSSRGG and GSGGGGGGGGGGGGGN. Positions 101–125 form a coiled coil; that stretch reads LHMTSENQEKVKALLRDLQEQDADA. A phosphoserine mark is found at Ser-127 and Ser-132. Positions 133 to 143 are enriched in acidic residues; sequence GEEEDDEPDCC. One can recognise a UBA domain in the interval 180–220; it reads TVSPFAVQKLSRYGFNTERCQAVLRMCDGDVGASLEHLLTQ. The C3H1-type zinc-finger motif lies at 299–326; sequence ENSLEICKFYLKGNCKFGSKCRFKHEVP. Phosphoserine occurs at positions 475, 477, and 480. In terms of domain architecture, Helicase ATP-binding spans 554–721; sequence LNLLRKHQVV…FNSCPVITIP (168 aa). ATP is bound at residue 567-574; it reads GMTGCGKT. The short motif at 668 to 671 is the DEVH box element; it reads DEVH. The 181-residue stretch at 830 to 1010 folds into the Helicase C-terminal domain; sequence LIEALLEWIV…QLCLRIKILE (181 aa).

This sequence belongs to the DEAD box helicase family. DEAH subfamily.

The catalysed reaction is ATP + H2O = ADP + phosphate + H(+). Its function is as follows. Probable ATP-binding RNA helicase. This chain is Putative ATP-dependent RNA helicase DHX57 (DHX57), found in Homo sapiens (Human).